Here is a 145-residue protein sequence, read N- to C-terminus: Transcriptional regulator MraZ (145 aa).

SpoVT-AbrB domains lie at 5 to 49 (TYNH…LESE) and 78 to 121 (TYKI…AKEV).

It belongs to the MraZ family. Forms oligomers.

It localises to the cytoplasm. The protein resides in the nucleoid. In Ureaplasma parvum serovar 3 (strain ATCC 27815 / 27 / NCTC 11736), this protein is Transcriptional regulator MraZ.